A 101-amino-acid chain; its full sequence is Urease subunit beta (101 aa).

This sequence belongs to the urease beta subunit family. In terms of assembly, heterotrimer of UreA (gamma), UreB (beta) and UreC (alpha) subunits. Three heterotrimers associate to form the active enzyme.

Its subcellular location is the cytoplasm. It carries out the reaction urea + 2 H2O + H(+) = hydrogencarbonate + 2 NH4(+). The protein operates within nitrogen metabolism; urea degradation; CO(2) and NH(3) from urea (urease route): step 1/1. In Chelativorans sp. (strain BNC1), this protein is Urease subunit beta.